The sequence spans 293 residues: Ribosomal protein L11 methyltransferase (293 aa).

Residues threonine 145, glycine 166, aspartate 188, and asparagine 229 each contribute to the S-adenosyl-L-methionine site.

The protein belongs to the methyltransferase superfamily. PrmA family.

It localises to the cytoplasm. It carries out the reaction L-lysyl-[protein] + 3 S-adenosyl-L-methionine = N(6),N(6),N(6)-trimethyl-L-lysyl-[protein] + 3 S-adenosyl-L-homocysteine + 3 H(+). Its function is as follows. Methylates ribosomal protein L11. The chain is Ribosomal protein L11 methyltransferase from Halorhodospira halophila (strain DSM 244 / SL1) (Ectothiorhodospira halophila (strain DSM 244 / SL1)).